Reading from the N-terminus, the 268-residue chain is Proteasome subunit beta type-4 (268 aa).

Belongs to the peptidase T1B family. As to quaternary structure, the 26S proteasome consists of a 20S proteasome core and two 19S regulatory subunits. The 20S proteasome core is composed of 28 subunits that are arranged in four stacked rings, resulting in a barrel-shaped structure. The two end rings are each formed by seven alpha subunits, and the two central rings are each formed by seven beta subunits. The catalytic chamber with the active sites is on the inside of the barrel.

It is found in the cytoplasm. The protein resides in the nucleus. Functionally, non-catalytic component of the proteasome, a multicatalytic proteinase complex which is characterized by its ability to cleave peptides with Arg, Phe, Tyr, Leu, and Glu adjacent to the leaving group at neutral or slightly basic pH. The proteasome has an ATP-dependent proteolytic activity. The sequence is that of Proteasome subunit beta type-4 (Prosbeta7) from Drosophila melanogaster (Fruit fly).